We begin with the raw amino-acid sequence, 525 residues long: GMP synthase [glutamine-hydrolyzing] (525 aa).

The region spanning 9 to 207 (RILILDFGSQ…VQDICGCEAL (199 aa)) is the Glutamine amidotransferase type-1 domain. Cys86 acts as the Nucleophile in catalysis. Residues His181 and Glu183 contribute to the active site. The 193-residue stretch at 208–400 (WTASNIVEDA…LGLPYDMVYR (193 aa)) folds into the GMPS ATP-PPase domain. An ATP-binding site is contributed by 235-241 (SGGVDSS).

In terms of assembly, homodimer.

It carries out the reaction XMP + L-glutamine + ATP + H2O = GMP + L-glutamate + AMP + diphosphate + 2 H(+). It functions in the pathway purine metabolism; GMP biosynthesis; GMP from XMP (L-Gln route): step 1/1. Its function is as follows. Catalyzes the synthesis of GMP from XMP. The protein is GMP synthase [glutamine-hydrolyzing] of Pseudomonas putida (strain GB-1).